Here is a 403-residue protein sequence, read N- to C-terminus: Tyrosine--tRNA ligase (403 aa).

Residues 42–51 (PTAPDLHLGH) carry the 'HIGH' region motif. Residues 226-230 (KMSKS) carry the 'KMSKS' region motif. Residue Lys-229 coordinates ATP. In terms of domain architecture, S4 RNA-binding spans 336–396 (MPISAVLNKA…GKKAFGRITL (61 aa)).

Belongs to the class-I aminoacyl-tRNA synthetase family. TyrS type 2 subfamily. Homodimer.

The protein localises to the cytoplasm. It catalyses the reaction tRNA(Tyr) + L-tyrosine + ATP = L-tyrosyl-tRNA(Tyr) + AMP + diphosphate + H(+). Catalyzes the attachment of tyrosine to tRNA(Tyr) in a two-step reaction: tyrosine is first activated by ATP to form Tyr-AMP and then transferred to the acceptor end of tRNA(Tyr). The polypeptide is Tyrosine--tRNA ligase (Pseudomonas syringae pv. tomato (strain ATCC BAA-871 / DC3000)).